The chain runs to 836 residues: Subtilisin-like protease PIMMS2 (836 aa).

Active-site charge relay system residues include Asp-155, His-222, and Ser-414. The disordered stretch occupies residues 802–836; it reads EKKNKYNNSVLKRNEMKSHNNSQKTPKIIPRKYSR.

This sequence belongs to the peptidase S8 family.

It localises to the cell membrane. It catalyses the reaction Hydrolysis of proteins with broad specificity for peptide bonds, and a preference for a large uncharged residue in P1. Hydrolyzes peptide amides.. In terms of biological role, probable serine protease which plays a role in ookinete traversal of the mosquito host midgut epithelium. This is Subtilisin-like protease PIMMS2 from Plasmodium berghei (strain Anka).